The primary structure comprises 387 residues: Eukaryotic translation initiation factor 3 subunit M (387 aa).

Residues 181 to 340 (LSSKVMIELL…HKVHITSTMH (160 aa)) enclose the PCI domain.

This sequence belongs to the eIF-3 subunit M family. In terms of assembly, component of the eukaryotic translation initiation factor 3 (eIF-3) complex. The eIF-3 complex interacts with pix.

The protein localises to the cytoplasm. It localises to the golgi apparatus. Component of the eukaryotic translation initiation factor 3 (eIF-3) complex, which is involved in protein synthesis of a specialized repertoire of mRNAs and, together with other initiation factors, stimulates binding of mRNA and methionyl-tRNAi to the 40S ribosome. The eIF-3 complex specifically targets and initiates translation of a subset of mRNAs involved in cell proliferation. The protein is Eukaryotic translation initiation factor 3 subunit M of Drosophila erecta (Fruit fly).